We begin with the raw amino-acid sequence, 180 residues long: MSRVGRLPIAIPADVTVTVTPDNLVTVKGPKGELVKTMHKDISIAVENNEVIVTRHSEQKDHRALHGLTRALINNMVIGVKQGYQKTLDLVGVGYRAQLQGKKLVMNLGYSHPVEIEPIDGITFETPAATRVIVSGIDKEKVGFAAADIRKWRVPEPYKGKGIKYENEVIRRKEGKTGKK.

It belongs to the universal ribosomal protein uL6 family. In terms of assembly, part of the 50S ribosomal subunit.

Its function is as follows. This protein binds to the 23S rRNA, and is important in its secondary structure. It is located near the subunit interface in the base of the L7/L12 stalk, and near the tRNA binding site of the peptidyltransferase center. In Clostridium beijerinckii (strain ATCC 51743 / NCIMB 8052) (Clostridium acetobutylicum), this protein is Large ribosomal subunit protein uL6.